The primary structure comprises 127 residues: Holo-[acyl-carrier-protein] synthase (127 aa).

The Mg(2+) site is built by Asp9 and Glu58.

The protein belongs to the P-Pant transferase superfamily. AcpS family. Mg(2+) is required as a cofactor.

Its subcellular location is the cytoplasm. The catalysed reaction is apo-[ACP] + CoA = holo-[ACP] + adenosine 3',5'-bisphosphate + H(+). Functionally, transfers the 4'-phosphopantetheine moiety from coenzyme A to a Ser of acyl-carrier-protein. This Shewanella baltica (strain OS195) protein is Holo-[acyl-carrier-protein] synthase.